We begin with the raw amino-acid sequence, 312 residues long: Methionyl-tRNA formyltransferase (312 aa).

A disordered region spans residues 34 to 54 (PDAASGRRGKPQPSPVAREAA). 110-113 (SLLP) provides a ligand contact to (6S)-5,6,7,8-tetrahydrofolate.

The protein belongs to the Fmt family.

It carries out the reaction L-methionyl-tRNA(fMet) + (6R)-10-formyltetrahydrofolate = N-formyl-L-methionyl-tRNA(fMet) + (6S)-5,6,7,8-tetrahydrofolate + H(+). In terms of biological role, attaches a formyl group to the free amino group of methionyl-tRNA(fMet). The formyl group appears to play a dual role in the initiator identity of N-formylmethionyl-tRNA by promoting its recognition by IF2 and preventing the misappropriation of this tRNA by the elongation apparatus. The protein is Methionyl-tRNA formyltransferase of Mycobacterium tuberculosis (strain ATCC 25177 / H37Ra).